A 172-amino-acid polypeptide reads, in one-letter code: Large ribosomal subunit protein uL10 (172 aa).

Belongs to the universal ribosomal protein uL10 family. As to quaternary structure, part of the ribosomal stalk of the 50S ribosomal subunit. The N-terminus interacts with L11 and the large rRNA to form the base of the stalk. The C-terminus forms an elongated spine to which L12 dimers bind in a sequential fashion forming a multimeric L10(L12)X complex.

Its function is as follows. Forms part of the ribosomal stalk, playing a central role in the interaction of the ribosome with GTP-bound translation factors. The polypeptide is Large ribosomal subunit protein uL10 (Francisella philomiragia subsp. philomiragia (strain ATCC 25017 / CCUG 19701 / FSC 153 / O#319-036)).